We begin with the raw amino-acid sequence, 132 residues long: MKGIRSNIPRALNAGAQIACVDNTGAKVVEIISVKKYRGVKNRMPCAGIGDMCVVSVKKGTPEMRKQILLAVVVRQKQEFRRPDGLHVSFEDNAMVITDEDGIPKGTDIKGPVAREVAERFPKIGTTASIIV.

This sequence belongs to the universal ribosomal protein uL14 family. In terms of assembly, part of the 50S ribosomal subunit. Forms a cluster with proteins L3 and L24e, part of which may contact the 16S rRNA in 2 intersubunit bridges.

Binds to 23S rRNA. Forms part of two intersubunit bridges in the 70S ribosome. In Methanosarcina mazei (strain ATCC BAA-159 / DSM 3647 / Goe1 / Go1 / JCM 11833 / OCM 88) (Methanosarcina frisia), this protein is Large ribosomal subunit protein uL14.